The chain runs to 210 residues: Acetoin utilization protein AcuA (210 aa).

An N-acetyltransferase domain is found at 19–189 (VLIEGPISPE…ANCLMARIGK (171 aa)).

It belongs to the acetyltransferase family. In terms of assembly, monomer.

It functions in the pathway ketone degradation; acetoin degradation. Its function is as follows. Part of the acuABC operon, which is possibly involved in the breakdown of acetoin and butanediol. Acts as an acetyltransferase inactivating acetyl-CoA synthetase AcsA via acetylation at a Lys residue. The chain is Acetoin utilization protein AcuA from Bacillus licheniformis (strain ATCC 14580 / DSM 13 / JCM 2505 / CCUG 7422 / NBRC 12200 / NCIMB 9375 / NCTC 10341 / NRRL NRS-1264 / Gibson 46).